We begin with the raw amino-acid sequence, 362 residues long: Peptide chain release factor 1 (362 aa).

N5-methylglutamine is present on Q237.

Belongs to the prokaryotic/mitochondrial release factor family. In terms of processing, methylated by PrmC. Methylation increases the termination efficiency of RF1.

Its subcellular location is the cytoplasm. Its function is as follows. Peptide chain release factor 1 directs the termination of translation in response to the peptide chain termination codons UAG and UAA. The chain is Peptide chain release factor 1 (prfA) from Aquifex aeolicus (strain VF5).